Reading from the N-terminus, the 709-residue chain is Kelch-like protein 11 (709 aa).

A signal peptide spans 1–15; sequence MAAAVAAAAAAAAAA. One can recognise a BTB domain in the interval 95 to 171; sequence CDITLCFGGA…MYTGRIRVST (77 aa). Residues 206 to 308 form the BACK domain; the sequence is CVAIHSLAHM…KPTYLTRHVK (103 aa). Kelch repeat units follow at residues 361–408, 409–454, 456–502, 504–557, and 611–662; these read VIMV…ITES, YVYV…EVKG, LYSI…AIED, FVYI…VVNS, and DVFI…HVRI. S466 carries the phosphoserine modification.

As to quaternary structure, homodimer. Interacts with CUL3. Component of a cullin-RING-based BCR (BTB-CUL3-RBX1) E3 ubiquitin-protein ligase complex.

Functionally, component of a cullin-RING-based BCR (BTB-CUL3-RBX1) E3 ubiquitin-protein ligase complex that mediates the ubiquitination of target proteins, leading most often to their proteasomal degradation. This chain is Kelch-like protein 11 (Klhl11), found in Mus musculus (Mouse).